We begin with the raw amino-acid sequence, 334 residues long: D-fructose 1,6-bisphosphatase class 2/sedoheptulose 1,7-bisphosphatase (334 aa).

Mn(2+)-binding residues include Asp-33, Glu-57, Asp-85, and Glu-88. Substrate-binding positions include 88-90, Tyr-119, 164-166, and 186-188; these read EGT, RAR, and DGD. Residue Glu-213 coordinates Mn(2+).

This sequence belongs to the FBPase class 2 family. In terms of assembly, homotetramer. The cofactor is Mn(2+).

It carries out the reaction beta-D-fructose 1,6-bisphosphate + H2O = beta-D-fructose 6-phosphate + phosphate. The catalysed reaction is D-sedoheptulose 1,7-bisphosphate + H2O = D-sedoheptulose 7-phosphate + phosphate. The protein operates within carbohydrate biosynthesis; Calvin cycle. Functionally, catalyzes the hydrolysis of fructose 1,6-bisphosphate (Fru 1,6-P2) and sedoheptulose 1,7-bisphosphate (Sed 1,7-P2) to fructose 6-phosphate and sedoheptulose 7-phosphate, respectively. The sequence is that of D-fructose 1,6-bisphosphatase class 2/sedoheptulose 1,7-bisphosphatase from Prochlorococcus marinus (strain MIT 9303).